Consider the following 387-residue polypeptide: Thermostable celloxylanase (387 aa).

The 342-residue stretch at 41–382 folds into the GH10 domain; that stretch reads AEDIPSLAEA…KPAFWAIVDP (342 aa). E185 serves as the catalytic Proton donor. The Nucleophile role is filled by E293.

The protein belongs to the glycosyl hydrolase 10 (cellulase F) family.

It catalyses the reaction Endohydrolysis of (1-&gt;4)-beta-D-glucosidic linkages in cellulose, lichenin and cereal beta-D-glucans.. The catalysed reaction is Endohydrolysis of (1-&gt;4)-beta-D-xylosidic linkages in xylans.. The protein operates within glycan degradation; xylan degradation. Its function is as follows. Active toward xylan, carboxymethylcellulose, P-nitrophenyl-beta-D-xylopyranoside and P-nitrophenyl-beta-D-cellobioside. The protein is Thermostable celloxylanase (xynB) of Thermoclostridium stercorarium (Clostridium stercorarium).